Here is a 738-residue protein sequence, read N- to C-terminus: Dipeptidyl peptidase 3 (738 aa).

An N-acetylalanine modification is found at A2. H450 contacts Zn(2+). E451 is a catalytic residue. H455 and E508 together coordinate Zn(2+).

This sequence belongs to the peptidase M49 family. Requires Zn(2+) as cofactor.

The protein localises to the cytoplasm. The catalysed reaction is Release of an N-terminal dipeptide from a peptide comprising four or more residues, with broad specificity. Also acts on dipeptidyl 2-naphthylamides.. Inhibited by spinorphin, an opioid peptide derived from hemoglobin. In terms of biological role, cleaves and degrades bioactive peptides, including angiotensin, Leu-enkephalin and Met-enkephalin. Also cleaves Arg-Arg-beta-naphthylamide. In Rattus norvegicus (Rat), this protein is Dipeptidyl peptidase 3 (Dpp3).